Consider the following 139-residue polypeptide: Large ribosomal subunit protein uL16 (139 aa).

The span at 1–16 (MLIPKRTKYRKQHRPV) shows a compositional bias: basic residues. Residues 1-22 (MLIPKRTKYRKQHRPVRSGMSK) form a disordered region.

Belongs to the universal ribosomal protein uL16 family. Part of the 50S ribosomal subunit.

Binds 23S rRNA and is also seen to make contacts with the A and possibly P site tRNAs. This Bifidobacterium longum (strain DJO10A) protein is Large ribosomal subunit protein uL16.